We begin with the raw amino-acid sequence, 98 residues long: NADH-ubiquinone oxidoreductase chain 4L (98 aa).

The next 3 helical transmembrane spans lie at 1–21 (MSMV…GLLM), 29–49 (SLLC…VTIL), and 61–81 (IILL…LVMV).

The protein belongs to the complex I subunit 4L family. In terms of assembly, core subunit of respiratory chain NADH dehydrogenase (Complex I) which is composed of 45 different subunits.

It localises to the mitochondrion inner membrane. It catalyses the reaction a ubiquinone + NADH + 5 H(+)(in) = a ubiquinol + NAD(+) + 4 H(+)(out). Functionally, core subunit of the mitochondrial membrane respiratory chain NADH dehydrogenase (Complex I) which catalyzes electron transfer from NADH through the respiratory chain, using ubiquinone as an electron acceptor. Part of the enzyme membrane arm which is embedded in the lipid bilayer and involved in proton translocation. The polypeptide is NADH-ubiquinone oxidoreductase chain 4L (MT-ND4L) (Erignathus barbatus (Bearded seal)).